Here is a 301-residue protein sequence, read N- to C-terminus: Protein ARMCX6 (301 aa).

The tract at residues Met-1–Glu-6 is mitochondrion outer membrane (MOM)-targeting sequence. Over Met-1–Met-7 the chain is Mitochondrial intermembrane. A helical; Signal-anchor membrane pass occupies residues Gly-8 to Tyr-25. The interval Lys-26–Glu-36 is mitochondrion outer membrane (MOM)-targeting sequence. Residues Lys-26 to Pro-301 are Cytoplasmic-facing. Positions Ser-70–Phe-105 are disordered.

This sequence belongs to the eutherian X-chromosome-specific Armcx family.

The protein localises to the mitochondrion. It is found in the mitochondrion outer membrane. Its function is as follows. May regulate the dynamics and distribution of mitochondria in neural cells. The chain is Protein ARMCX6 (Armcx6) from Rattus norvegicus (Rat).